A 240-amino-acid polypeptide reads, in one-letter code: Small ribosomal subunit protein uS3 (240 aa).

Positions 39 to 108 (LRKFLKKKLY…ELILNIKEER (70 aa)) constitute a KH type-2 domain. The segment covering 213–224 (MNSDDTATPERK) has biased composition (basic and acidic residues). Positions 213–240 (MNSDDTATPERKAPRRRKGRRNVNAKKN) are disordered. The segment covering 225–240 (APRRRKGRRNVNAKKN) has biased composition (basic residues).

The protein belongs to the universal ribosomal protein uS3 family. Part of the 30S ribosomal subunit. Forms a tight complex with proteins S10 and S14.

Its function is as follows. Binds the lower part of the 30S subunit head. Binds mRNA in the 70S ribosome, positioning it for translation. This is Small ribosomal subunit protein uS3 from Nautilia profundicola (strain ATCC BAA-1463 / DSM 18972 / AmH).